The chain runs to 220 residues: Translation initiation factor 6 (220 aa).

The protein belongs to the eIF-6 family.

Binds to the 50S ribosomal subunit and prevents its association with the 30S ribosomal subunit to form the 70S initiation complex. In Pyrobaculum aerophilum (strain ATCC 51768 / DSM 7523 / JCM 9630 / CIP 104966 / NBRC 100827 / IM2), this protein is Translation initiation factor 6.